Here is a 213-residue protein sequence, read N- to C-terminus: 3-isopropylmalate dehydratase small subunit (213 aa).

The protein belongs to the LeuD family. LeuD type 1 subfamily. As to quaternary structure, heterodimer of LeuC and LeuD.

It carries out the reaction (2R,3S)-3-isopropylmalate = (2S)-2-isopropylmalate. The protein operates within amino-acid biosynthesis; L-leucine biosynthesis; L-leucine from 3-methyl-2-oxobutanoate: step 2/4. Functionally, catalyzes the isomerization between 2-isopropylmalate and 3-isopropylmalate, via the formation of 2-isopropylmaleate. This is 3-isopropylmalate dehydratase small subunit from Neisseria meningitidis serogroup B (strain ATCC BAA-335 / MC58).